Here is a 140-residue protein sequence, read N- to C-terminus: MKFTTGLSVLLFFVLQVFAEKLTELVVGVTKEPVDCKIKASKGDVVSVHYTGKLRDSGEIFDSSYNRGVPIQFKLGYSQVISGWDQGILGMCIGEGRTLHIPSELGYGSRGAGSVIPPDADLIFETELVDIQREAVDDEL.

An N-terminal signal peptide occupies residues 1-19 (MKFTTGLSVLLFFVLQVFA). In terms of domain architecture, PPIase FKBP-type spans 43 to 132 (GDVVSVHYTG…IFETELVDIQ (90 aa)).

This sequence belongs to the FKBP-type PPIase family. FKBP2 subfamily.

The protein resides in the endoplasmic reticulum. It carries out the reaction [protein]-peptidylproline (omega=180) = [protein]-peptidylproline (omega=0). Its activity is regulated as follows. Inhibited by both FK506 and rapamycin. Functionally, PPIases accelerate the folding of proteins. It catalyzes the cis-trans isomerization of proline imidic peptide bonds in oligopeptides. The sequence is that of FK506-binding protein 2 (FPR2) from Kluyveromyces lactis (strain ATCC 8585 / CBS 2359 / DSM 70799 / NBRC 1267 / NRRL Y-1140 / WM37) (Yeast).